The chain runs to 840 residues: Cytosolic carboxypeptidase 2 (840 aa).

Residues Y358–C628 form the Peptidase M14 domain. Zn(2+)-binding residues include H424, E427, and H520. E592 functions as the Proton donor/acceptor in the catalytic mechanism. Positions M706–K719 are enriched in basic residues. 2 disordered regions span residues M706–Q726 and E758–S789.

This sequence belongs to the peptidase M14 family. As to quaternary structure, interacts with RARRES1, KIF11 and MAPRE1. Zn(2+) serves as cofactor.

Its subcellular location is the cytoplasm. The protein resides in the cytosol. The protein localises to the cytoskeleton. It is found in the microtubule organizing center. It localises to the centrosome. Its subcellular location is the centriole. The protein resides in the cilium basal body. The enzyme catalyses (L-glutamyl)(n+1)-gamma-L-glutamyl-L-glutamyl-[protein] + H2O = (L-glutamyl)(n)-gamma-L-glutamyl-L-glutamyl-[protein] + L-glutamate. Its activity is regulated as follows. Inhibited by RARRES1. Its function is as follows. Metallocarboxypeptidase that mediates deglutamylation of tubulin and non-tubulin target proteins. Catalyzes the removal of polyglutamate side chains present on the gamma-carboxyl group of glutamate residues within the C-terminal tail of tubulin protein. Specifically cleaves tubulin long-side-chains, while it is not able to remove the branching point glutamate. Also catalyzes the removal of polyglutamate residues from the carboxy-terminus of non-tubulin proteins such as MYLK. The protein is Cytosolic carboxypeptidase 2 (AGBL2) of Macaca fascicularis (Crab-eating macaque).